We begin with the raw amino-acid sequence, 320 residues long: Beta-ketoacyl-[acyl-carrier-protein] synthase III (320 aa).

Residues Cys114 and His247 contribute to the active site. The segment at 248 to 252 (QANRR) is ACP-binding. Residue Asn277 is part of the active site.

Belongs to the thiolase-like superfamily. FabH family. As to quaternary structure, homodimer.

It localises to the cytoplasm. The enzyme catalyses malonyl-[ACP] + acetyl-CoA + H(+) = 3-oxobutanoyl-[ACP] + CO2 + CoA. It participates in lipid metabolism; fatty acid biosynthesis. Functionally, catalyzes the condensation reaction of fatty acid synthesis by the addition to an acyl acceptor of two carbons from malonyl-ACP. Catalyzes the first condensation reaction which initiates fatty acid synthesis and may therefore play a role in governing the total rate of fatty acid production. Possesses both acetoacetyl-ACP synthase and acetyl transacylase activities. Its substrate specificity determines the biosynthesis of branched-chain and/or straight-chain of fatty acids. This is Beta-ketoacyl-[acyl-carrier-protein] synthase III from Neisseria meningitidis serogroup B (strain ATCC BAA-335 / MC58).